The chain runs to 105 residues: UPF0235 protein RF_1332 (105 aa).

The protein belongs to the UPF0235 family.

The polypeptide is UPF0235 protein RF_1332 (Rickettsia felis (strain ATCC VR-1525 / URRWXCal2) (Rickettsia azadi)).